Consider the following 337-residue polypeptide: MRAPGFWWSVPTALPARLLAPLGRLYGGQVARRMARPGASAPLPVICVGNVTLGGAGKTPTALALAGLLREIGHEPAFLSRGYGGRLPGPVRVDPAQHGAAEVGDEPLLLARAAPTIVARDRPAGAALCAAADATAIIMDDGLQNPSLRKDWSIAVFDAGVGIGNGLAFPAGPLRAPLAAQWPHIDAVLIIGEGPAGEPVAADAVRRGLPVIRAQLRPEPGAAAALAGRPVLAFAGIGRPDKFFESLRAAGAEIRATRAFPDHHAYRAADLAGLERLARREGLTLVTTEKDRVRLPAAAPVTVLPVSLHFSEPDAALLRARLAALGPAPPDPRTRPD.

52-59 (TLGGAGKT) is an ATP binding site.

Belongs to the LpxK family.

The catalysed reaction is a lipid A disaccharide + ATP = a lipid IVA + ADP + H(+). The protein operates within glycolipid biosynthesis; lipid IV(A) biosynthesis; lipid IV(A) from (3R)-3-hydroxytetradecanoyl-[acyl-carrier-protein] and UDP-N-acetyl-alpha-D-glucosamine: step 6/6. Transfers the gamma-phosphate of ATP to the 4'-position of a tetraacyldisaccharide 1-phosphate intermediate (termed DS-1-P) to form tetraacyldisaccharide 1,4'-bis-phosphate (lipid IVA). The polypeptide is Tetraacyldisaccharide 4'-kinase (Methylobacterium nodulans (strain LMG 21967 / CNCM I-2342 / ORS 2060)).